A 108-amino-acid polypeptide reads, in one-letter code: Ig kappa chain V-V region HP 124E1 (108 aa).

The framework-1 stretch occupies residues 1–23 (DIQMTQTTSSLSASLGDRVTISC). A disulfide bridge links cysteine 23 with cysteine 88. The complementarity-determining-1 stretch occupies residues 24-34 (RASQDINNYLN). The segment at 35-49 (WYQQKPDGTVKLLIY) is framework-2. The tract at residues 50–56 (YTSRLHS) is complementarity-determining-2. The tract at residues 57-88 (GVPSRFSGSGSGTDYSLTISNLEQEDIATYFC) is framework-3. Residues 89-97 (QQGKTLPRT) form a complementarity-determining-3 region. The tract at residues 98-108 (FGGGTKLEIKR) is framework-4.

This chain is Ig kappa chain V-V region HP 124E1, found in Mus musculus (Mouse).